Reading from the N-terminus, the 459-residue chain is Ribulose bisphosphate carboxylase large chain (459 aa).

K4 carries the N6,N6,N6-trimethyllysine modification. Residues N113 and T163 each coordinate substrate. K165 functions as the Proton acceptor in the catalytic mechanism. Residue K167 coordinates substrate. K191, D193, and E194 together coordinate Mg(2+). At K191 the chain carries N6-carboxylysine. H284 acts as the Proton acceptor in catalysis. Positions 285, 317, and 369 each coordinate substrate.

Belongs to the RuBisCO large chain family. Type I subfamily. As to quaternary structure, heterohexadecamer of 8 large chains and 8 small chains; disulfide-linked. The disulfide link is formed within the large subunit homodimers. Mg(2+) is required as a cofactor. In terms of processing, the disulfide bond which can form in the large chain dimeric partners within the hexadecamer appears to be associated with oxidative stress and protein turnover.

It localises to the plastid. The protein resides in the chloroplast. The enzyme catalyses 2 (2R)-3-phosphoglycerate + 2 H(+) = D-ribulose 1,5-bisphosphate + CO2 + H2O. It carries out the reaction D-ribulose 1,5-bisphosphate + O2 = 2-phosphoglycolate + (2R)-3-phosphoglycerate + 2 H(+). Functionally, ruBisCO catalyzes two reactions: the carboxylation of D-ribulose 1,5-bisphosphate, the primary event in carbon dioxide fixation, as well as the oxidative fragmentation of the pentose substrate in the photorespiration process. Both reactions occur simultaneously and in competition at the same active site. The polypeptide is Ribulose bisphosphate carboxylase large chain (Garrya elliptica (Wavyleaf silktassel)).